A 327-amino-acid polypeptide reads, in one-letter code: Glycerol-3-phosphate dehydrogenase [NAD(P)+] (327 aa).

NADPH-binding residues include phenylalanine 13, arginine 34, and lysine 107. Residues lysine 107 and glycine 135 each contribute to the sn-glycerol 3-phosphate site. Alanine 139 is an NADPH binding site. Positions 190, 243, 253, 254, and 255 each coordinate sn-glycerol 3-phosphate. Lysine 190 functions as the Proton acceptor in the catalytic mechanism. Arginine 254 is an NADPH binding site. The NADPH site is built by valine 276 and glutamate 277.

Belongs to the NAD-dependent glycerol-3-phosphate dehydrogenase family.

The protein resides in the cytoplasm. The enzyme catalyses sn-glycerol 3-phosphate + NAD(+) = dihydroxyacetone phosphate + NADH + H(+). The catalysed reaction is sn-glycerol 3-phosphate + NADP(+) = dihydroxyacetone phosphate + NADPH + H(+). The protein operates within membrane lipid metabolism; glycerophospholipid metabolism. In terms of biological role, catalyzes the reduction of the glycolytic intermediate dihydroxyacetone phosphate (DHAP) to sn-glycerol 3-phosphate (G3P), the key precursor for phospholipid synthesis. This chain is Glycerol-3-phosphate dehydrogenase [NAD(P)+], found in Rhizobium johnstonii (strain DSM 114642 / LMG 32736 / 3841) (Rhizobium leguminosarum bv. viciae).